The primary structure comprises 244 residues: Orotidine 5'-phosphate decarboxylase (244 aa).

Residues Asp20, Lys42, 70 to 79, Thr125, Arg186, Gln195, Gly215, and Arg216 contribute to the substrate site; that span reads DLKFFDIPAT. Lys72 acts as the Proton donor in catalysis.

Belongs to the OMP decarboxylase family. Type 1 subfamily. Homodimer.

The catalysed reaction is orotidine 5'-phosphate + H(+) = UMP + CO2. It functions in the pathway pyrimidine metabolism; UMP biosynthesis via de novo pathway; UMP from orotate: step 2/2. Catalyzes the decarboxylation of orotidine 5'-monophosphate (OMP) to uridine 5'-monophosphate (UMP). This chain is Orotidine 5'-phosphate decarboxylase, found in Xylella fastidiosa (strain M12).